Here is a 456-residue protein sequence, read N- to C-terminus: ATP-dependent protease ATPase subunit HslU (456 aa).

ATP contacts are provided by residues valine 18, 60 to 65 (GVGKTE), aspartate 269, glutamate 334, and arginine 406.

It belongs to the ClpX chaperone family. HslU subfamily. As to quaternary structure, a double ring-shaped homohexamer of HslV is capped on each side by a ring-shaped HslU homohexamer. The assembly of the HslU/HslV complex is dependent on binding of ATP.

It is found in the cytoplasm. Its function is as follows. ATPase subunit of a proteasome-like degradation complex; this subunit has chaperone activity. The binding of ATP and its subsequent hydrolysis by HslU are essential for unfolding of protein substrates subsequently hydrolyzed by HslV. HslU recognizes the N-terminal part of its protein substrates and unfolds these before they are guided to HslV for hydrolysis. This chain is ATP-dependent protease ATPase subunit HslU, found in Desulfosudis oleivorans (strain DSM 6200 / JCM 39069 / Hxd3) (Desulfococcus oleovorans).